The chain runs to 138 residues: DNA-directed RNA polymerase subunit omega (138 aa).

Positions N117–S138 are disordered. The segment covering F124–S138 has biased composition (polar residues).

This sequence belongs to the RNA polymerase subunit omega family. As to quaternary structure, the RNAP catalytic core consists of 2 alpha, 1 beta, 1 beta' and 1 omega subunit. When a sigma factor is associated with the core the holoenzyme is formed, which can initiate transcription.

It catalyses the reaction RNA(n) + a ribonucleoside 5'-triphosphate = RNA(n+1) + diphosphate. Functionally, promotes RNA polymerase assembly. Latches the N- and C-terminal regions of the beta' subunit thereby facilitating its interaction with the beta and alpha subunits. This Ehrlichia canis (strain Jake) protein is DNA-directed RNA polymerase subunit omega.